We begin with the raw amino-acid sequence, 350 residues long: Phenylalanine--tRNA ligase alpha subunit (350 aa).

Mg(2+) is bound at residue E259.

It belongs to the class-II aminoacyl-tRNA synthetase family. Phe-tRNA synthetase alpha subunit type 1 subfamily. In terms of assembly, tetramer of two alpha and two beta subunits. It depends on Mg(2+) as a cofactor.

The protein localises to the cytoplasm. The catalysed reaction is tRNA(Phe) + L-phenylalanine + ATP = L-phenylalanyl-tRNA(Phe) + AMP + diphosphate + H(+). The chain is Phenylalanine--tRNA ligase alpha subunit (pheS) from Rickettsia prowazekii (strain Madrid E).